A 4367-amino-acid polypeptide reads, in one-letter code: MMDSVPSPPPQPSPDANGVATTPFAAVDPVKVVDHLVLLLEATLGAKRDELEAPGSLLSKVRYSDTVQRCSRFALDTQVALYIQKDLAPTTTLDGDNGAEAEEPEPTHVYTISSDLTSSPTTVAYLVLLKRPQPLDPIVPLTSQIQMLNLPGPAYLSTSGSEQGPTSSPYEILQLYLHNGLAPYFDASTKSQQLLNGARGRPDVDAKTGIPVTKKRWTELELSLSHLQQNVEIPEVSLPFHPLVQSTLEEAATKNVKPSIDLLPATVLADSTFLNNLQATVNNWIKSIQVITKMTRDPTTGTANQEINFWLSMEAALEGIENQLRSEGVMLTLDILKHAKRFQATVSFTADTGLKEAMEKVQKYNQLMRDFPLDELLSATTLTKVQESIGQIFGHLNKKLRICPYPIRRALPLVEAISGDLDEVLHRLLPGTELVKLDYEEFKGVMKQAGSIFRAWDESIKEFTNVAREVTRRRNEKFIPIKINPRHAELQSRLDYVHNFRDNHEQLQRTIINVLGPKATVNGIVTASGANGVAVVEEIGDVDAVDEVKQAWEALKDVDLLDCTREGTEKWVRAENIYNERTARVENSIIARLRDRLATAKNANEMFRVFSKFNALFVRPKIRGAIAEYQTQLIDNVKQAISSLHERFKQQYGHSEAHAMAQLHDLPPVSGAIIWARQIERQLDQYMKKVEQVLGSDWALHTEGQKLQNESDLFRKKLDTRPIFEAWLHDVQRKQISISGLLFTINRIRSAGNILELAVNFDAQVIALFKETRNLLWLNYPVPHSVNNVAKEAKRVYPFAVSLMESVRTFAQTNRQISDMSEVAVLLSGHRNDVYTLISKGIPLRWETFVNTYEVHFKPTFNPNTPLGQTGSKVSETKHVMFIREFAASVSLLQSKTLLLANIYVTVQKALNELKTCPYEASAFQSRLETIQHAVDQLNLEQYVNLGYWVERMNRQIKDVLYTRLQVAIQAWIQAFEDEDVERPSERKRLLEIASPDAAKSIGPVIKSLVHEITMRNQVIYLDPPLEYARASWFAQLQDWIGVICNLKKIKATRYTMSLSTEVVDEPRFNDLPGDCTEELLRVQTSVEKKIREIGAYVDKWLQFQSLWDLQSEHVYDVLGDQLSRWLQLLQEIRKTRQTFDTTEVSRSFGHITIDYDQVQTKVNAKYDQWQQDILIKFASRLGNRMREVYAELEKARKDLEGQAMTANSTAEAVRFITIVQSCTRQVKLWAPEIETFRQGESTLVRQRYHFQNDWLHAEQVDGMWDMLNELLARKSKIVTDQSDALRAKITAEDKVVNDKIAEIAHQWNEEKPVSGTIAPDVASATLTHFEQRITKLQEESAMVAKAKEALDLAPTPDTSLGVILEEVQDFKSVWASLSTIWKNLNELRETLWNSVQPRKIRASIDNLIKMTKEMPSRMRQYAAFEHIQNVLRQLMKVNSILGELKSEAVRDRHWTKIYKQIKPGKRYSPVSMTLGDVWDLNLVATEVIVKDIIIQAQGEMALEEFLKQVRETWTNYGLELVQYQQKCRLIRGWDDLFAKCSENLNSLQAMKHSPYYKEFEEEASSWEEKLNRVHVLFDIWIDVQRQWVYLEGVFHGNADIKHLLPIESSRFQNINSEFLAVMKKVYKQPNVLDVLNIPNVQKSLERLAELLNKIQKALGEYLEKERVSFPRFYFVGDEDLLEMIGNSNDTMRIAKHFKKMFAGLNGLVMDDEGVISGFTSKEGETVRLKKEINLVKTPRINDWLALLENGMKVTLAELLAEAVDEFTPIFSSENVDRDALIKFMNTYPSQIVVLATQVVWTTAVDQALADGGKDLQLLFDREVQVLRMLADTVLGDLEVLLRKKCEQLITECVHQRDVIEKLVKLNANSNTHYMWLLQMRYVYNPEGDFLQRLHIKMANAKLNYGFEYLGVPDRLVRTPLTDRCFLTLTQALCQRLGGSPYGPAGTGKTESVKALGLQLGRFTLVFCCDDTFDNQAMGRIFLGICQVGAWGCFDEFNRLEEKILSAVSQQIQDIQLGLKMGAEDEKAQIELDGRQIHVNANAGIFITMNPGYAGRSNLPDNLKKLFRSVAMSKPDKELIAEVMLYSQGFNQAKQLSKHTVPFFDQCSEKLSKQAHYDFGLRALKSVLVSSGGLKRARLLETGDAESLGPEDVVEPEIIVQSIRETIAPKLIKSDVEIMMEIESVCFPGVKYVPASLEKLQEAIRRLAAERQLVVNDIWMTKVLQLYQIQKIHHGVMMVGNSGSGKSAAWRLLLDALQQTENVEGVSHVIDSKVMSKEALYGNLDSTTREWTDGLFTSILRKIVDNLRGEDAKRHWIVFDGDVDPEWVENLNSVLDDNKLLTLPNGERLNLPPNVRIMFEVENLKYATLATVSRCGMVWFSEDTVTPDMMVSNYIETLRTVAFEDLDEDAVATGQSSAKALAVQSQAADLLQEFLTRDNLINEVLKEAANYEHIMEFTVARVLSTLFSLLNKAVRDIIEYNSAHVDFPMDPEQVEGYIAKKVLLALVWALTGDCPLKDRKAFGDKVAGLASFGSPPLDGTSSLIDFTVTMPQGEWQTWQQHVPTIEVNTHSVTQTDVVIPTLDTIRHEDVLYSWLAEHKPLLLCGPPGSGKTMTLFSALRKLPNMEVVGLNFSSATTPDLLIKTFEQYCEYKKTLNGVMLSPTQIGRWLVIFCDEINLPAPDKYGTQRAISFLRQLVEHNGFWRTSDKAWVTLDRIQFVGACNPPTDAGRTPMGARFLRHAPLIMVDYPGELSLMQIYGSFNAAVLKVIPSLRGYAEALTQAMVRFYLESQERFTPKIQPHYVYSPRELTRWVRGVYEAIRPLETLSVEGLIRIWAHEALRLFQDRLVDEEERKWTDDAVRRIAMEYFPTIDEHKALGGPILFSNWLSKNYVPVDREQLRDFVKARLKTFCEEEVDVPLILFNDVLEHVLRIDRVFRQPQGHLILIGVSGSGKTTLSRFVAWMNGLKVFQIKVHGKYSAEDFDEDLREVLRRCGCKGEKICFIMDESNVLDSGFLERMNTLLANAEVPGLFEGDDLAALMTACKEGAQRQGLLLDSQEELYKWFTGQIVKNLHVVFTMNPPGEDGLSSKAATSPALFNRCVLNWFGDWSDQALFQVAHELTHSVDLDRPNWTAPDTIPVAYRGLNLPPSHREAVVNAMVYIHYSLQRFNAKLLKQQGKITFLTPRHFLDFVAQYVKLYNEKREDLEEQQRHLNVGLEKLRDTVDKVRDLRVTLSEKKAQLEQKDAEANEKLQRMVADQREAEQRKNISLEIQAALEKQEAEVASRKKVVLEDLARAEPAVEEAKASVSSIKRQHLTEVRSMPTPPSGVKLALESVCTLIGHKANDWKTIQGIVRRDDFIASIVNFNNEKQMTKSLRVKMRNEFLANPEFTFEKVNRASKACGPLVQWVEAQVNYAEILDRVGPLREEVMLLEEQALQTKAEAKAVEQTISTLENSIARYKTEYAALISETQAIKAEMSRVQFKVDRSVKLLDSLSSERTRWEEGSRSFETQISTLVGDVLVAAAFLAYSGLYDQTFRKSMMEDWLHQLHLSGVQFKQHNPMTEYLSTADERLSWQENTLPVDDLCTENAIILKRFNRYPLIIDPSGRATEFLNRESKDRKLTVTSFLDDSFTKVLESSLRFGNPILIQDAEHLDPVLNHVLNKEYQKTGGRVLIQLGKQQIDFSPAFKLYLSTRDPSATFAPDICSRTTFVNFTVTQSSLQTQSLNEVLKSERPDVDERRSNLIKLQGEFKVHLRQLEKKLLQALNESRGNILDDDHVIETLETLKTEAAEISAKMSNTEGVMAEVEQITLQYNIIARSCSAVFAVLEQLHYLNHFYRFSLQYFLDIFHSVLRGNPHLANETNHNVRRDIIVKDLFVATFKRTALGLLQKDRITLAMLLAQASPYKMDKGLLDIILDERIEGKDVSIDQNTREEAFARAKKIPALKNKIDAVPEADWEKFFTEELAEDFVPKIWNDETEPNDRALMSLLLVKLFRLDRFVPAAERFVTLVFGSDLFDIVEDLKQTVDQVSAILPIALVSSPGFDASYKVDGLVERMRVRCTNIAMGSAEAEGSADKAIANAAQTGSWVLIKNVHLAPGWLQGVEKKMETLNPNPEFRLFLSMESSPKIPVNLLRASRVLMYEQPAGVRANMKDSMSSISTRSLKSPVERTRLYLLLSFLHAVVQERLRYAPNLGWKGFWEFNDADYECSAHVIDTWIDTAAHGRTNIAPSNIPWEMIRYLIVETYGGKIDDENDFKMLNQLVHTFLTPSAFDIGHKLVEVSHDAEDEQKDAATGGDLVVPSGTSLQEFMSWIQKLPEREPPTYLGLPANAEKLLLVGLGKSLIGNLKKVTDLLDEGEAIMAEASEAA.

A compositionally biased stretch (pro residues) spans 1–13 (MMDSVPSPPPQPS). A disordered region spans residues 1-20 (MMDSVPSPPPQPSPDANGVA). Residues 1–1904 (MMDSVPSPPP…HIKMANAKLN (1904 aa)) are stem. Coiled-coil stretches lie at residues 676–693 (ARQIERQLDQYMKKVEQV), 1176–1215 (IKFASRLGNRMREVYAELEKARKDLEGQAMTANSTAEAVR), 1327–1351 (LTHFEQRITKLQEESAMVAKAKEAL), 1557–1574 (YKEFEEEASSWEEKLNRV), and 1637–1668 (NIPNVQKSLERLAELLNKIQKALGEYLEKERV). AAA regions lie at residues 1905-2130 (YGFE…VLVS), 2202-2460 (EAIR…FTVA), 2566-2815 (EVNT…WVRG), and 2909-3179 (TFCE…QGKI). 1943–1950 (GPAGTGKT) provides a ligand contact to ATP. Positions 2195–2218 (ASLEKLQEAIRRLAAERQLVVNDI) form a coiled coil. ATP is bound by residues 2240–2247 (GNSGSGKS), 2605–2612 (GPPGSGKT), and 2947–2954 (GVSGSGKT). Coiled coils occupy residues 3193-3296 (QYVK…LARA), 3423-3481 (PLRE…SRVQ), and 3778-3809 (VIETLETLKTEAAEISAKMSNTEGVMAEVEQI). A stalk region spans residues 3193 to 3481 (QYVKLYNEKR…AIKAEMSRVQ (289 aa)). AAA regions lie at residues 3565-3794 (LSTA…EISA) and 4003-4215 (AERF…VIDT).

This sequence belongs to the dynein heavy chain family. As to quaternary structure, consists of at least two heavy chains and a number of intermediate and light chains.

It is found in the cytoplasm. The protein localises to the cytoskeleton. Its function is as follows. Cytoplasmic dynein acts as a motor for the intracellular retrograde motility of vesicles and organelles along microtubules. Dynein has ATPase activity; the force-producing power stroke is thought to occur on release of ADP. Required to maintain uniform nuclear distribution in hyphae. This is Dynein heavy chain, cytoplasmic (ro-1) from Neurospora crassa (strain ATCC 24698 / 74-OR23-1A / CBS 708.71 / DSM 1257 / FGSC 987).